The chain runs to 1015 residues: Putative calcium-transporting ATPase 7, plasma membrane-type (1015 aa).

Residue Met-1 is modified to N-acetylmethionine. The Cytoplasmic segment spans residues 1 to 161 (MESYLNSNFD…NKFAESELRS (161 aa)). The interaction with calmodulin stretch occupies residues 20 to 31 (VLEKWRNLCSVV). At Ser-45 the chain carries Phosphoserine; by CPK. A helical transmembrane segment spans residues 162–182 (FWVFVWEALQDMTLMILGVCA). Over 183–200 (FVSLIVGIATEGWPQGSH) the chain is Lumenal. A helical membrane pass occupies residues 201–221 (DGLGIVASILLVVFVTATSDY). Residues 222-349 (RQSLQFRDLD…DDETPLQVKL (128 aa)) are Cytoplasmic-facing. A helical membrane pass occupies residues 350–369 (NGVATIIGKIGLSFAIVTFA). At 370–399 (VLVQGMFMRKLSLGPHWWWSGDDALELLEY) the chain is on the lumenal side. Residues 400 to 417 (FAIAVTIVVVAVPEGLPL) traverse the membrane as a helical segment. At 418-811 (AVTLSLAFAM…KWGRSVYINI (394 aa)) the chain is on the cytoplasmic side. The active-site 4-aspartylphosphate intermediate is the Asp-455. The Mg(2+) site is built by Asp-756 and Asp-760. The chain crosses the membrane as a helical span at residues 812-830 (QKFVQFQLTVNVVALIVNF). The Lumenal portion of the chain corresponds to 831 to 841 (SSACLTGSAPL). The chain crosses the membrane as a helical span at residues 842-862 (TAVQLLWVNMIMDTLGALALA). The Cytoplasmic segment spans residues 863 to 882 (TEPPNNELMKRMPVGRRGNF). Residues 883–905 (ITNAMWRNILGQAVYQFIIIWIL) form a helical membrane-spanning segment. Residues 906 to 917 (QAKGKSMFGLVG) lie on the Lumenal side of the membrane. Residues 918–939 (SDSTLVLNTLIFNCFVFCQVFN) traverse the membrane as a helical segment. Over 940-957 (EVSSREMEEIDVFKGILD) the chain is Cytoplasmic. The helical transmembrane segment at 958-979 (NYVFVVVIGATVFFQIIIIEFL) threads the bilayer. Residues 980–989 (GTFASTTPLT) are Lumenal-facing. A helical transmembrane segment spans residues 990-1011 (IVQWFFSIFVGFLGMPIAAGLK). Residues 1012-1015 (KIPV) lie on the Cytoplasmic side of the membrane.

It belongs to the cation transport ATPase (P-type) (TC 3.A.3) family. Type IIB subfamily.

It is found in the membrane. The catalysed reaction is Ca(2+)(in) + ATP + H2O = Ca(2+)(out) + ADP + phosphate + H(+). Activated by calmodulin. This magnesium-dependent enzyme catalyzes the hydrolysis of ATP coupled with the translocation of calcium from the cytosol out of the cell or into organelles. The protein is Putative calcium-transporting ATPase 7, plasma membrane-type (ACA7) of Arabidopsis thaliana (Mouse-ear cress).